Reading from the N-terminus, the 529-residue chain is Cytochrome P450 monooxygenase CLM2 (529 aa).

Residues leucine 2 to histidine 19 form a helical membrane-spanning segment. Asparagine 244 and asparagine 281 each carry an N-linked (GlcNAc...) asparagine glycan. Residue cysteine 438 coordinates heme.

Belongs to the cytochrome P450 family. Heme serves as cofactor.

The protein resides in the membrane. The enzyme catalyses (-)-longiborneol + reduced [NADPH--hemoprotein reductase] + O2 = culmorin + oxidized [NADPH--hemoprotein reductase] + H2O + H(+). It participates in mycotoxin biosynthesis. Functionally, cytochrome P450 monooxygenase involved in the biosynthesis of culmorin, a tricyclic sesquiterpene diol reported to have antifungal activity and some phytotoxicity to wheat coleoptile tissue, contributing to Fusarium head blight disease. The terpene cyclase CLM1 is responsible for the cyclization of farnesyl diphosphate into the intermediate longiborneol. Longiborneol is then hydroxylated in a regio- and endo-stereoselective manner at position C-11 by the cytochrome P450 monooxygenase CLM2 to produce culmorin. Additional non-specific oxygenases are also able to hydroxylate longiborneol at other sites than C-11 leading to 3-hydroxylongiborneol, 5-hydroxylongiborneol, 12-hydroxylongiborneol and 15-hydroxylongiborneol. Moreover, another oxygenase capable of installing a C-11 exo-hydroxy group in longiborneol can also yield 11-epi-acetylculmorin. The production of these longiborneol derivatives is dwarfed by the high abundance of culmorin, suggesting that CLM2 displays superior enzymatic activity to the unidentified, possibly promiscuous, additional oxygenases. The polypeptide is Cytochrome P450 monooxygenase CLM2 (Gibberella zeae (strain ATCC MYA-4620 / CBS 123657 / FGSC 9075 / NRRL 31084 / PH-1) (Wheat head blight fungus)).